We begin with the raw amino-acid sequence, 357 residues long: Glycerol-3-phosphate dehydrogenase [NAD(P)+] (357 aa).

Residues S30, F31, R51, and K124 each coordinate NADPH. 2 residues coordinate sn-glycerol 3-phosphate: K124 and G152. A156 is an NADPH binding site. K207, D260, S270, R271, and N272 together coordinate sn-glycerol 3-phosphate. The active-site Proton acceptor is the K207. An NADPH-binding site is contributed by R271. NADPH is bound at residue E297.

This sequence belongs to the NAD-dependent glycerol-3-phosphate dehydrogenase family.

It localises to the cytoplasm. It carries out the reaction sn-glycerol 3-phosphate + NAD(+) = dihydroxyacetone phosphate + NADH + H(+). The catalysed reaction is sn-glycerol 3-phosphate + NADP(+) = dihydroxyacetone phosphate + NADPH + H(+). Its pathway is membrane lipid metabolism; glycerophospholipid metabolism. In terms of biological role, catalyzes the reduction of the glycolytic intermediate dihydroxyacetone phosphate (DHAP) to sn-glycerol 3-phosphate (G3P), the key precursor for phospholipid synthesis. This is Glycerol-3-phosphate dehydrogenase [NAD(P)+] from Acinetobacter baumannii (strain SDF).